The primary structure comprises 862 residues: DNA mismatch repair protein MutS (862 aa).

ATP is bound at residue 608 to 615 (GPNMAGKS).

Belongs to the DNA mismatch repair MutS family.

In terms of biological role, this protein is involved in the repair of mismatches in DNA. It is possible that it carries out the mismatch recognition step. This protein has a weak ATPase activity. In Bacteroides thetaiotaomicron (strain ATCC 29148 / DSM 2079 / JCM 5827 / CCUG 10774 / NCTC 10582 / VPI-5482 / E50), this protein is DNA mismatch repair protein MutS.